The following is a 115-amino-acid chain: NADH-ubiquinone oxidoreductase chain 3 (115 aa).

Helical transmembrane passes span 3-23 (VMLA…IAFW), 55-75 (FFLV…LLPL), and 84-104 (LPTM…SLAY).

It belongs to the complex I subunit 3 family. In terms of assembly, core subunit of respiratory chain NADH dehydrogenase (Complex I) which is composed of 45 different subunits. Interacts with TMEM186. Interacts with TMEM242.

It is found in the mitochondrion inner membrane. It catalyses the reaction a ubiquinone + NADH + 5 H(+)(in) = a ubiquinol + NAD(+) + 4 H(+)(out). Core subunit of the mitochondrial membrane respiratory chain NADH dehydrogenase (Complex I) which catalyzes electron transfer from NADH through the respiratory chain, using ubiquinone as an electron acceptor. Essential for the catalytic activity of complex I. The chain is NADH-ubiquinone oxidoreductase chain 3 from Felis catus (Cat).